A 308-amino-acid polypeptide reads, in one-letter code: tRNA dimethylallyltransferase (308 aa).

Residue 9–16 (GPTAAGKT) participates in ATP binding. Substrate is bound at residue 11–16 (TAAGKT). Interaction with substrate tRNA regions lie at residues 34–37 (DSMQ) and 158–162 (QRLLR).

Belongs to the IPP transferase family. In terms of assembly, monomer. It depends on Mg(2+) as a cofactor.

The enzyme catalyses adenosine(37) in tRNA + dimethylallyl diphosphate = N(6)-dimethylallyladenosine(37) in tRNA + diphosphate. In terms of biological role, catalyzes the transfer of a dimethylallyl group onto the adenine at position 37 in tRNAs that read codons beginning with uridine, leading to the formation of N6-(dimethylallyl)adenosine (i(6)A). This Maricaulis maris (strain MCS10) (Caulobacter maris) protein is tRNA dimethylallyltransferase.